Reading from the N-terminus, the 118-residue chain is Holo-[acyl-carrier-protein] synthase (118 aa).

Positions 9 and 52 each coordinate Mg(2+).

This sequence belongs to the P-Pant transferase superfamily. AcpS family. Requires Mg(2+) as cofactor.

It is found in the cytoplasm. It catalyses the reaction apo-[ACP] + CoA = holo-[ACP] + adenosine 3',5'-bisphosphate + H(+). Its function is as follows. Transfers the 4'-phosphopantetheine moiety from coenzyme A to a Ser of acyl-carrier-protein. In Frankia alni (strain DSM 45986 / CECT 9034 / ACN14a), this protein is Holo-[acyl-carrier-protein] synthase.